A 1898-amino-acid chain; its full sequence is 1-phosphatidylinositol 4,5-bisphosphate phosphodiesterase epsilon-1 (1898 aa).

The Ras-GEF domain maps to 66–328 (FPEEVAFQLS…EREQKEKEAK (263 aa)). Disordered regions lie at residues 419-444 (QPLD…GVGV) and 569-722 (TNTN…GPSG). The span at 569 to 583 (TNTNATRPNDSSLSS) shows a compositional bias: polar residues. The span at 590–605 (SRLKNLKNAMQKKLRG) shows a compositional bias: basic residues. Low complexity-rich tracts occupy residues 625-637 (PPSI…SQSG), 666-687 (YTPR…GGRS), and 701-716 (SGSI…QVSG). One can recognise a PI-PLC X-box domain in the interval 910 to 1058 (EDLRYPLSHY…MKNKILIKNK (149 aa)). Catalysis depends on residues His925 and His970. Disordered regions lie at residues 1082–1178 (QLNL…DRKT) and 1238–1274 (EEGP…STQL). A compositionally biased stretch (acidic residues) spans 1098–1123 (TVDEVEDDDLDEFLDDEENEEDDQEE). The segment covering 1124–1144 (VQVRSEKEDSPKTSKRAEKSA) has biased composition (basic and acidic residues). Over residues 1146–1155 (NIKQQDSLCS) the composition is skewed to polar residues. Composition is skewed to low complexity over residues 1163 to 1172 (KPSTSKTTSK) and 1242 to 1253 (ASASLSFSSRAR). The PI-PLC Y-box domain maps to 1279-1385 (AAEFLGSVRA…CGYQLKPRCL (107 aa)). In terms of domain architecture, C2 spans 1391–1517 (LLYNKFLPLS…PLRTPTNLPI (127 aa)). The region spanning 1570–1665 (QIFVLRITGA…RRFVLRKKGS (96 aa)) is the Ras-associating 1 domain. Positions 1680 to 1694 (GTSGSSTSVSPSPLT) are enriched in low complexity. Residues 1680 to 1711 (GTSGSSTSVSPSPLTKDGHVKSASSNQLHGRS) form a disordered region. The Ras-associating 2 domain occupies 1738 to 1857 (DTFLVCVHNV…GRFVLENRKD (120 aa)).

As to quaternary structure, interacts (via Ras-associating domain 1) with let-60 (in GTP-bound form). Ca(2+) is required as a cofactor. Expressed in the spermatheca, vulva, intestine and excretory cells. Expressed in sensory neurons AWC, AFD, ASE, ASG and BAG, interneurons, ventral nerve cord neurons and tail neurons. Expressed in body muscles.

It catalyses the reaction a 1,2-diacyl-sn-glycero-3-phospho-(1D-myo-inositol-4,5-bisphosphate) + H2O = 1D-myo-inositol 1,4,5-trisphosphate + a 1,2-diacyl-sn-glycerol + H(+). Its function is as follows. The production of the second messenger molecules diacylglycerol (DAG) and inositol 1,4,5-trisphosphate (IP3) is mediated by activated phosphatidylinositol-specific phospholipase C enzymes. plc-1 is a bifunctional enzyme which also regulates small GTPases of the Ras superfamily through its Ras guanine-exchange factor (RasGEF) activity. By activating IP3 receptor itr-1-mediated intracellular Ca(2+) release via the production of IP3, regulates ovulation by controlling contraction and/or dilation of the distal spermatheca valve during oocyte entry and the timing of the dilation of the spermatheca-uterine valve during oocyte exit. In a similar manner, plays an essential role in epidermal morphogenesis by regulating migration of epidermal cells during ventral closure and to a lesser extent by regulating epidermal cell dorsal intercalation. Involved in the immune response to S.aureus bacterium by activating kinase dkf-1 via the production of DAG which in turn activates transcription factor hlh-30. In ASER neurons, required for adjusting the orientation behavior in salt gradients based on the memory of previous salt concentration encountered. The chain is 1-phosphatidylinositol 4,5-bisphosphate phosphodiesterase epsilon-1 from Caenorhabditis elegans.